Here is a 228-residue protein sequence, read N- to C-terminus: Urease subunit gamma/beta (228 aa).

The urease gamma stretch occupies residues 1 to 101; that stretch reads MQLTERERDK…LVTVHDPIRG (101 aa). Residues 102–228 form a urease beta region; it reads AASRRVAGEY…ARAAGFGGAQ (127 aa).

The protein in the N-terminal section; belongs to the urease gamma subunit family. It in the C-terminal section; belongs to the urease beta subunit family. As to quaternary structure, heterohexamer of 3 UreC (alpha) and 3 UreAB (gamma/beta) subunits.

It localises to the cytoplasm. The catalysed reaction is urea + 2 H2O + H(+) = hydrogencarbonate + 2 NH4(+). It functions in the pathway nitrogen metabolism; urea degradation; CO(2) and NH(3) from urea (urease route): step 1/1. This chain is Urease subunit gamma/beta, found in Deinococcus radiodurans (strain ATCC 13939 / DSM 20539 / JCM 16871 / CCUG 27074 / LMG 4051 / NBRC 15346 / NCIMB 9279 / VKM B-1422 / R1).